The following is a 429-amino-acid chain: Enolase (429 aa).

Gln162 contacts (2R)-2-phosphoglycerate. The active-site Proton donor is Glu204. Asp241, Glu286, and Asp313 together coordinate Mg(2+). Positions 338, 367, 368, and 389 each coordinate (2R)-2-phosphoglycerate. Lys338 serves as the catalytic Proton acceptor.

The protein belongs to the enolase family. Mg(2+) serves as cofactor.

The protein localises to the cytoplasm. It localises to the secreted. Its subcellular location is the cell surface. It carries out the reaction (2R)-2-phosphoglycerate = phosphoenolpyruvate + H2O. It functions in the pathway carbohydrate degradation; glycolysis; pyruvate from D-glyceraldehyde 3-phosphate: step 4/5. Functionally, catalyzes the reversible conversion of 2-phosphoglycerate (2-PG) into phosphoenolpyruvate (PEP). It is essential for the degradation of carbohydrates via glycolysis. The chain is Enolase from Halalkalibacterium halodurans (strain ATCC BAA-125 / DSM 18197 / FERM 7344 / JCM 9153 / C-125) (Bacillus halodurans).